A 61-amino-acid chain; its full sequence is Large ribosomal subunit protein bL32 (61 aa).

Over residues 1-16 (MAVPKRKTSPSRRGMR) the composition is skewed to basic residues. The interval 1–61 (MAVPKRKTSP…RQILKPKAEA (61 aa)) is disordered. A compositionally biased stretch (basic and acidic residues) spans 28–44 (VEDKDSGELRRPHHLDL).

This sequence belongs to the bacterial ribosomal protein bL32 family.

The polypeptide is Large ribosomal subunit protein bL32 (Xanthobacter autotrophicus (strain ATCC BAA-1158 / Py2)).